A 380-amino-acid chain; its full sequence is Putative 8-amino-7-oxononanoate synthase (380 aa).

Arginine 18 contributes to the substrate binding site. Residue glycine 106–tyrosine 107 participates in pyridoxal 5'-phosphate binding. Histidine 131 is a binding site for substrate. Pyridoxal 5'-phosphate contacts are provided by residues serine 179, aspartate 205–histidine 208, and threonine 236–lysine 239. An N6-(pyridoxal phosphate)lysine modification is found at lysine 239. Threonine 352 serves as a coordination point for substrate.

It belongs to the class-II pyridoxal-phosphate-dependent aminotransferase family. BioF subfamily. In terms of assembly, homodimer. Requires pyridoxal 5'-phosphate as cofactor.

The catalysed reaction is 6-carboxyhexanoyl-[ACP] + L-alanine + H(+) = (8S)-8-amino-7-oxononanoate + holo-[ACP] + CO2. It functions in the pathway cofactor biosynthesis; biotin biosynthesis. Functionally, catalyzes the decarboxylative condensation of pimeloyl-[acyl-carrier protein] and L-alanine to produce 8-amino-7-oxononanoate (AON), [acyl-carrier protein], and carbon dioxide. In Neisseria meningitidis serogroup B (strain ATCC BAA-335 / MC58), this protein is Putative 8-amino-7-oxononanoate synthase (bioF).